A 465-amino-acid polypeptide reads, in one-letter code: Cysteine--tRNA ligase (465 aa).

C29 lines the Zn(2+) pocket. Residues 31 to 41 (PTVYNYIHIGN) carry the 'HIGH' region motif. Residues C209, H234, and E238 each contribute to the Zn(2+) site. A 'KMSKS' region motif is present at residues 266 to 270 (KMSKS). K269 contacts ATP. Phosphoserine is present on S270.

It belongs to the class-I aminoacyl-tRNA synthetase family. As to quaternary structure, monomer. Zn(2+) serves as cofactor.

It localises to the cytoplasm. It carries out the reaction tRNA(Cys) + L-cysteine + ATP = L-cysteinyl-tRNA(Cys) + AMP + diphosphate. The sequence is that of Cysteine--tRNA ligase from Bacillus thuringiensis (strain Al Hakam).